A 456-amino-acid chain; its full sequence is Cysteine--tRNA ligase (456 aa).

Cysteine 29 is a Zn(2+) binding site. The 'HIGH' region motif lies at 31–41; sequence PTVYDYAHVGN. The Zn(2+) site is built by cysteine 209, histidine 234, and glutamate 238. The short motif at 267-271 is the 'KMSKS' region element; that stretch reads KMSKS. Position 270 (lysine 270) interacts with ATP.

The protein belongs to the class-I aminoacyl-tRNA synthetase family. As to quaternary structure, monomer. The cofactor is Zn(2+).

It is found in the cytoplasm. The catalysed reaction is tRNA(Cys) + L-cysteine + ATP = L-cysteinyl-tRNA(Cys) + AMP + diphosphate. This chain is Cysteine--tRNA ligase, found in Rhodospirillum centenum (strain ATCC 51521 / SW).